The following is a 517-amino-acid chain: MLALLLSPYGAYLGLALLVLYYLLPYLKRAHLRDIPAPGLAAFTNFWLLLQTRRGHRFVVVDNAHKKYGKLVRIAPRHTSIADDGAIQAVYGHGNGFLKSDFYDAFVSIHRGLFNTRDRAEHTRKRKTVSHTFSMKSIGQFEQYIHGNIELFVKQWNRMADTQRNPKTGFASLDALNWFNYLAFDIIGDLAFGAPFGMLDKGKDFAEMRKTPDSPPSYVQAVEVLNRRGEVSATLGCYPALKPFAKYLPDSFFRDGIQAVEDLAGIAVARVNERLRPEVMANNTRVDLLARLMEGKDSNGEKLGRAELTAEALTQLIAGSDTTSNTSCAILYWCMRTPGVIEKLHKALDEAIPQDVDVPTHAMVKDIPYLQWVIWETMRIHSTSAMGLPREIPAGNPPVTISGHTFYPGDVVSVPSYTIHRSKEIWGPDAEQFVPERWDPARLTPRQKAAFIPFSTGPRACVGRNVAEMELLVICGTVFRLFEFEMQQEGPMETREGFLRKPLGLQVGMKRRQPGSA.

A helical membrane pass occupies residues Leu4–Leu24. Asn282 and Asn325 each carry an N-linked (GlcNAc...) asparagine glycan. A heme-binding site is contributed by Cys461.

Belongs to the cytochrome P450 family. The cofactor is heme.

Its subcellular location is the membrane. It catalyses the reaction benzoate + reduced [NADPH--hemoprotein reductase] + O2 = 4-hydroxybenzoate + oxidized [NADPH--hemoprotein reductase] + H2O + H(+). Cytochrome P450 monooxygenase; part of the benzoic acid degradation pathway also known as the protocatechuic acid pathway. Benzoic acid debradation begins with the conversion of benzoic acid into 4-hydroxybenzoic acid through hydroxylation by the benzoate-4-monooxygenase bphA, and its partner NADPH-cytochrome P450 reductase cprA which act as a mediator in electron donation from NADPH. 4-Hydroxybenzoic acid is then converted into 3,4-dihydroxybenzoic acid (also called protocatechuic acid) by the p-hydroxybenzoate-m-hydroxylase phhA. Protocatechuic acid is converted into 3-carboxy-cis,cis-muconic acid by the intradiol ring-cleavage dioxygenase prcA, which is further metabolized through the 3-oxoadipate pathway to finally enter the tricarboxylic acid cycle (TCA). In terms of biological role, responsible for cytochrome P450 dependent benzoate hydroxylation in microsomes; requires cprA as the mediator in electron donation from NADPH. In Aspergillus niger, this protein is Benzoate 4-monooxygenase bphA.